A 506-amino-acid polypeptide reads, in one-letter code: Cobyric acid synthase (506 aa).

One can recognise a GATase cobBQ-type domain in the interval 251–448; sequence DITIAIVQLP…LHGLFDSDAF (198 aa). Catalysis depends on Cys-332, which acts as the Nucleophile. His-440 is an active-site residue.

It belongs to the CobB/CobQ family. CobQ subfamily.

It functions in the pathway cofactor biosynthesis; adenosylcobalamin biosynthesis. Functionally, catalyzes amidations at positions B, D, E, and G on adenosylcobyrinic A,C-diamide. NH(2) groups are provided by glutamine, and one molecule of ATP is hydrogenolyzed for each amidation. The chain is Cobyric acid synthase from Salmonella agona (strain SL483).